We begin with the raw amino-acid sequence, 353 residues long: MAIKYGRPIELREVSRRDGAAASPALDLAIRPRRNRKAEWARRMVRENVLTTDDLIWPLFLIDGNNKREQIASMPGVERLSVDQAVREAERAMKLTIPCIALFPYTDPSLRDEEGSEACNPNNLVCQAVRAIKKEFPEIGVLCDVALDPFTSHGHDGLIADGAILNDETVAVLVRQALVQAEAGCDIIAPSDMMDGRVAAIREGLDQAGLIDVQIMAYAAKYASAFYGPFRDAIGSAKTLTGDKRTYQMDSANTDEALREVELDISEGADMVMVKPGMPYLDVVRRVKDTFAMPTFAYQVSGEYAMIAAAAGNGWLDGDRAMMESLLAFKRAGADGVLSYFAPKAAEKLRTQG.

Residue Lys-221 is the Schiff-base intermediate with substrate of the active site. Positions 231 and 244 each coordinate 5-aminolevulinate. Residue Glu-260 coordinates Mg(2+). Lys-275 functions as the Schiff-base intermediate with substrate in the catalytic mechanism. 5-aminolevulinate contacts are provided by Ser-301 and Tyr-340.

Belongs to the ALAD family. As to quaternary structure, homooctamer. It depends on Mg(2+) as a cofactor.

The enzyme catalyses 2 5-aminolevulinate = porphobilinogen + 2 H2O + H(+). Its pathway is porphyrin-containing compound metabolism; protoporphyrin-IX biosynthesis; coproporphyrinogen-III from 5-aminolevulinate: step 1/4. In terms of biological role, catalyzes an early step in the biosynthesis of tetrapyrroles. Binds two molecules of 5-aminolevulinate per subunit, each at a distinct site, and catalyzes their condensation to form porphobilinogen. Required for nodule development. The polypeptide is Delta-aminolevulinic acid dehydratase (hemB) (Bradyrhizobium diazoefficiens (strain JCM 10833 / BCRC 13528 / IAM 13628 / NBRC 14792 / USDA 110)).